We begin with the raw amino-acid sequence, 149 residues long: Large ribosomal subunit protein uL11 (149 aa).

It belongs to the universal ribosomal protein uL11 family. As to quaternary structure, part of the ribosomal stalk of the 50S ribosomal subunit. Interacts with L10 and the large rRNA to form the base of the stalk. L10 forms an elongated spine to which L12 dimers bind in a sequential fashion forming a multimeric L10(L12)X complex. In terms of processing, one or more lysine residues are methylated.

Functionally, forms part of the ribosomal stalk which helps the ribosome interact with GTP-bound translation factors. This chain is Large ribosomal subunit protein uL11, found in Xanthobacter autotrophicus (strain ATCC BAA-1158 / Py2).